The following is a 105-amino-acid chain: UPF0166 protein aq_450 (105 aa).

The protein belongs to the UPF0166 family.

The protein is UPF0166 protein aq_450 of Aquifex aeolicus (strain VF5).